The sequence spans 236 residues: Small ribosomal subunit protein uS2c (236 aa).

Belongs to the universal ribosomal protein uS2 family.

It is found in the plastid. The protein localises to the chloroplast. This is Small ribosomal subunit protein uS2c (rps2) from Nymphaea alba (White water-lily).